We begin with the raw amino-acid sequence, 422 residues long: Keratan-sulfate endo-1,4-beta-galactosidase (422 aa).

The signal sequence occupies residues methionine 1–leucine 46. One can recognise a GH16 domain in the interval asparagine 47–phenylalanine 292. The active-site Nucleophile is glutamate 171. Glutamate 176 functions as the Proton donor in the catalytic mechanism. One can recognise a CBM-cenC domain in the interval leucine 291–lysine 406.

Belongs to the glycosyl hydrolase 16 family.

It localises to the secreted. The catalysed reaction is Endohydrolysis of (1-&gt;4)-beta-D-galactosidic linkages in keratan sulfate.. Its function is as follows. Hydrolyzes internal endo-beta-galactosyl linkages in keratan sulfate and in various neolacto-type glycosphingolipids, producing sulfated and non-sulfated disaccharides, and glucosylceramides respectivly. The sequence is that of Keratan-sulfate endo-1,4-beta-galactosidase from Sphingobacterium multivorum.